We begin with the raw amino-acid sequence, 222 residues long: UPF0502 protein Shewmr4_1554 (222 aa).

A compositionally biased stretch (polar residues) spans 175–193; the sequence is SLSADSPSAGSNSLNAQDR. The interval 175 to 194 is disordered; that stretch reads SLSADSPSAGSNSLNAQDRQ.

The protein belongs to the UPF0502 family.

This is UPF0502 protein Shewmr4_1554 from Shewanella sp. (strain MR-4).